Reading from the N-terminus, the 634-residue chain is MQRSIATVSLSGTLPEKLEAIAAAGFDGVEIFENDLLHYDGSPRDVRRLCADLGLEILLFQPFRDFEGCRRERLGRNLERAERKFDLMQELGTDLVLVCSNVAADALGEPALLADDLRQLAERAAVRGLRIGYEALAWGRQVNTWEQAWDLVRRADQANLGLILDSFHTLSLDGDPRGIADLPGEKIFFVQMADAPLLAMDVLEWSRHFRCFPGQGGFDLAGFLAPVVASGYRGPLSLEVFNDGFRAAPTRANAVDGLRSLLYLEEKTREHLQRQTPHVAVDELFAPPPASLCDGIEFLEFAVDETLGARLGQWLQRLGFARAGEHRSKNVSLLRQGDINLVLNAEPYSFAHGFFEAHGPSLCATALCVRDAGQALERARAYGGQPYRGLLGPNEREIPAVRALDGSLLYLVERHTEGRSIYDSDFVTNDADTSGLGLRRVDHVALALPAEGLDSWVLFYKSLFDFGADDEVVLPDPYGLVTSRAVRSPCGSVRLPLNISEDRNTAIARSLSSYRGSGVHHIAFDCADIFAAVAQAKEAGVALLEIPLNYYDDLAARFDFDDEFLSELAYYNVLYDRDAQGGELFHVFTEPFEERFFFEILQRRHGYAGYGAANVPVRLAAMAQARRGVRRVKL.

Residues Glu-134, Asp-165, Gln-191, and Glu-239 each coordinate a divalent metal cation. 2 VOC domains span residues 295 to 414 (GIEF…LVER) and 440 to 590 (RVDH…VFTE). Mg(2+) is bound by residues His-443, His-521, and Glu-599.

It belongs to the bacterial two-domain DSD family. As to quaternary structure, homodimer. The cofactor is Co(2+). Requires Ni(2+) as cofactor. Mg(2+) is required as a cofactor. Mn(2+) serves as cofactor.

It carries out the reaction 3-dehydroshikimate = 3,4-dihydroxybenzoate + H2O. The protein operates within aromatic compound metabolism; 3,4-dihydroxybenzoate biosynthesis. Functionally, catalyzes the conversion of 3-dehydroshikimate to protocatechuate (3,4-dihydroxybenzoate), a common intermediate of quinate and shikimate degradation pathways. Is required for growth on either quinate or shikimate as a sole carbon source. The protein is 3-dehydroshikimate dehydratase of Pseudomonas aeruginosa (strain ATCC 15692 / DSM 22644 / CIP 104116 / JCM 14847 / LMG 12228 / 1C / PRS 101 / PAO1).